Consider the following 311-residue polypeptide: Ribonuclease Z (311 aa).

Zn(2+)-binding residues include His-61, His-63, Asp-65, His-66, His-139, Asp-210, and His-268. The Proton acceptor role is filled by Asp-65.

It belongs to the RNase Z family. As to quaternary structure, homodimer. It depends on Zn(2+) as a cofactor.

The catalysed reaction is Endonucleolytic cleavage of RNA, removing extra 3' nucleotides from tRNA precursor, generating 3' termini of tRNAs. A 3'-hydroxy group is left at the tRNA terminus and a 5'-phosphoryl group is left at the trailer molecule.. Zinc phosphodiesterase, which displays some tRNA 3'-processing endonuclease activity. Probably involved in tRNA maturation, by removing a 3'-trailer from precursor tRNA. In Haloarcula marismortui (strain ATCC 43049 / DSM 3752 / JCM 8966 / VKM B-1809) (Halobacterium marismortui), this protein is Ribonuclease Z.